The chain runs to 38 residues: Photosystem II reaction center protein L (38 aa).

A helical transmembrane segment spans residues 17–37; the sequence is SLYWGLLLIFVLAVLFSNYFF.

The protein belongs to the PsbL family. As to quaternary structure, PSII is composed of 1 copy each of membrane proteins PsbA, PsbB, PsbC, PsbD, PsbE, PsbF, PsbH, PsbI, PsbJ, PsbK, PsbL, PsbM, PsbT, PsbX, PsbY, PsbZ, Psb30/Ycf12, at least 3 peripheral proteins of the oxygen-evolving complex and a large number of cofactors. It forms dimeric complexes.

The protein localises to the plastid. It localises to the chloroplast thylakoid membrane. In terms of biological role, one of the components of the core complex of photosystem II (PSII). PSII is a light-driven water:plastoquinone oxidoreductase that uses light energy to abstract electrons from H(2)O, generating O(2) and a proton gradient subsequently used for ATP formation. It consists of a core antenna complex that captures photons, and an electron transfer chain that converts photonic excitation into a charge separation. This subunit is found at the monomer-monomer interface and is required for correct PSII assembly and/or dimerization. This Ananas comosus (Pineapple) protein is Photosystem II reaction center protein L.